The following is a 101-amino-acid chain: NAD(P)H-quinone oxidoreductase subunit 4L, chloroplastic (101 aa).

3 helical membrane-spanning segments follow: residues 2-22 (MLEHVLVLSSYLLSIGIYGLI), 32-52 (MCLELILNAVNINFVTFSDLF), and 61-81 (IFSIFVIGIAAAEAAIGLAII).

It belongs to the complex I subunit 4L family. NDH is composed of at least 16 different subunits, 5 of which are encoded in the nucleus.

Its subcellular location is the plastid. It localises to the chloroplast thylakoid membrane. It catalyses the reaction a plastoquinone + NADH + (n+1) H(+)(in) = a plastoquinol + NAD(+) + n H(+)(out). It carries out the reaction a plastoquinone + NADPH + (n+1) H(+)(in) = a plastoquinol + NADP(+) + n H(+)(out). Functionally, NDH shuttles electrons from NAD(P)H:plastoquinone, via FMN and iron-sulfur (Fe-S) centers, to quinones in the photosynthetic chain and possibly in a chloroplast respiratory chain. The immediate electron acceptor for the enzyme in this species is believed to be plastoquinone. Couples the redox reaction to proton translocation, and thus conserves the redox energy in a proton gradient. The chain is NAD(P)H-quinone oxidoreductase subunit 4L, chloroplastic from Ranunculus macranthus (Large buttercup).